A 157-amino-acid polypeptide reads, in one-letter code: Crossover junction endodeoxyribonuclease RuvC (157 aa).

Catalysis depends on residues aspartate 7, glutamate 67, and aspartate 140. The Mg(2+) site is built by aspartate 7, glutamate 67, and aspartate 140.

It belongs to the RuvC family. Homodimer which binds Holliday junction (HJ) DNA. The HJ becomes 2-fold symmetrical on binding to RuvC with unstacked arms; it has a different conformation from HJ DNA in complex with RuvA. In the full resolvosome a probable DNA-RuvA(4)-RuvB(12)-RuvC(2) complex forms which resolves the HJ. Requires Mg(2+) as cofactor.

It localises to the cytoplasm. The enzyme catalyses Endonucleolytic cleavage at a junction such as a reciprocal single-stranded crossover between two homologous DNA duplexes (Holliday junction).. The RuvA-RuvB-RuvC complex processes Holliday junction (HJ) DNA during genetic recombination and DNA repair. Endonuclease that resolves HJ intermediates. Cleaves cruciform DNA by making single-stranded nicks across the HJ at symmetrical positions within the homologous arms, yielding a 5'-phosphate and a 3'-hydroxyl group; requires a central core of homology in the junction. The consensus cleavage sequence is 5'-(A/T)TT(C/G)-3'. Cleavage occurs on the 3'-side of the TT dinucleotide at the point of strand exchange. HJ branch migration catalyzed by RuvA-RuvB allows RuvC to scan DNA until it finds its consensus sequence, where it cleaves and resolves the cruciform DNA. This chain is Crossover junction endodeoxyribonuclease RuvC, found in Rickettsia africae (strain ESF-5).